Consider the following 113-residue polypeptide: MAMTTRTLLLAAVCAAAALPRGWSPIKNIDDPHIQELGRWAITENNRVSPSDELTFHRVTGGEQQVVSGMNYRLEIEAASGGGDVTGSYGAVVFEQEWSNTRKLISFDKNHNF.

An N-terminal signal peptide occupies residues 1 to 18; sequence MAMTTRTLLLAAVCAAAA. The Secondary area of contact motif lies at 65–69; it reads QVVSG.

This sequence belongs to the cystatin family. Phytocystatin subfamily.

It localises to the secreted. In terms of biological role, specific inhibitor of cysteine proteinases. Probably involved in the regulation of endogenous processes and in defense against pests and pathogens. This is Cysteine proteinase inhibitor 6 from Oryza sativa subsp. japonica (Rice).